The sequence spans 418 residues: Serpin A9 (418 aa).

An N-terminal signal peptide occupies residues 1–25 (MGSSSFYRVLLLVGFCAPIFCMLSS). N-linked (GlcNAc...) asparagine glycosylation is found at Asn-103, Asn-213, and Asn-224.

This sequence belongs to the serpin family.

Its subcellular location is the secreted. This chain is Serpin A9 (Serpina9), found in Mus musculus (Mouse).